A 386-amino-acid polypeptide reads, in one-letter code: Succinate--CoA ligase [ADP-forming] subunit beta (386 aa).

The 236-residue stretch at 9-244 folds into the ATP-grasp domain; the sequence is KEILRKYGVP…HDEEDPLETR (236 aa). ATP contacts are provided by residues Lys-46, 53–55, Glu-99, Cys-102, and Glu-107; that span reads GRG. Asn-199 and Asp-213 together coordinate Mg(2+). Substrate-binding positions include Asn-264 and 321-323; that span reads GIM.

This sequence belongs to the succinate/malate CoA ligase beta subunit family. In terms of assembly, heterotetramer of two alpha and two beta subunits. The cofactor is Mg(2+).

The catalysed reaction is succinate + ATP + CoA = succinyl-CoA + ADP + phosphate. It catalyses the reaction GTP + succinate + CoA = succinyl-CoA + GDP + phosphate. The protein operates within carbohydrate metabolism; tricarboxylic acid cycle; succinate from succinyl-CoA (ligase route): step 1/1. Functionally, succinyl-CoA synthetase functions in the citric acid cycle (TCA), coupling the hydrolysis of succinyl-CoA to the synthesis of either ATP or GTP and thus represents the only step of substrate-level phosphorylation in the TCA. The beta subunit provides nucleotide specificity of the enzyme and binds the substrate succinate, while the binding sites for coenzyme A and phosphate are found in the alpha subunit. The chain is Succinate--CoA ligase [ADP-forming] subunit beta from Rickettsia felis (strain ATCC VR-1525 / URRWXCal2) (Rickettsia azadi).